The following is a 251-amino-acid chain: Cell division protein ZapD (251 aa).

This sequence belongs to the ZapD family. In terms of assembly, interacts with FtsZ.

It localises to the cytoplasm. Cell division factor that enhances FtsZ-ring assembly. Directly interacts with FtsZ and promotes bundling of FtsZ protofilaments, with a reduction in FtsZ GTPase activity. This is Cell division protein ZapD from Paraburkholderia phytofirmans (strain DSM 17436 / LMG 22146 / PsJN) (Burkholderia phytofirmans).